Reading from the N-terminus, the 589-residue chain is Transmembrane 9 superfamily member 3 (589 aa).

Positions 1–28 are cleaved as a signal peptide; the sequence is MRPLPGALGVAAAAALWLLLLLLPRTRA. Residue asparagine 174 is glycosylated (N-linked (GlcNAc...) asparagine). 5 helical membrane passes run 224-244, 294-314, 328-348, 360-380, and 389-409; these read FSIFNSFMMVIFLVGLVSMIL, LIGSGCQIFAVSLIVIIVAMI, AIFVYAATSPVNGYFGGSLYA, FIGAFLIPAMVCGTAFFINFI, and AIPFGTMVAVCCICFFVILPL. A glycan (N-linked (GlcNAc...) asparagine) is linked at asparagine 419. The next 4 membrane-spanning stretches (helical) occupy residues 449-469, 482-502, 519-539, and 551-571; these read IVCLGGILPFGSIFIEMYFIF, GFMMLVLVILCIVTVCVTIVC, FLSAASTAIYVYMYSFYYYFF, and FYFGYMAVFSTALGIMCGAIG.

The protein belongs to the nonaspanin (TM9SF) (TC 9.A.2) family.

It is found in the membrane. The sequence is that of Transmembrane 9 superfamily member 3 (TM9SF3) from Homo sapiens (Human).